We begin with the raw amino-acid sequence, 146 residues long: VEWSASERSTITSLWGKINVAEIGPQALARVLIVYPWTQRYFGKFGDLSNAAAIQGNAKVAAHGKVVLGALEKAVKNMDDVKGTYSKLSQLHNEKLNVDPDNFRLLGDCLTIVLATKLGAGFPAEIQAVWQKFVAVVVSALSKQYF.

Positions 2-146 constitute a Globin domain; it reads EWSASERSTI…VVSALSKQYF (145 aa). Heme b contacts are provided by His63 and His92.

Belongs to the globin family. As to quaternary structure, heterotetramer of two alpha chains and two beta chains. Red blood cells.

Functionally, involved in oxygen transport from gills to the various peripheral tissues. This is Hemoglobin cathodic subunit beta (hbb2) from Anguilla anguilla (European freshwater eel).